A 1052-amino-acid chain; its full sequence is Kinesin-like protein KIF11 (1052 aa).

The region spanning 17–358 is the Kinesin motor domain; that stretch reads NIQVVVRCRP…LEYAHRAKNI (342 aa). 104–111 is a binding site for ATP; sequence GQTGTGKT. Position 145 is an N6-acetyllysine (Lys-145). Positions 364–478 form a coiled coil; the sequence is VNQKLTKKAL…ETKLQLVKEE (115 aa). Thr-457 carries the phosphothreonine modification. Lys-476 participates in a covalent cross-link: Glycyl lysine isopeptide (Lys-Gly) (interchain with G-Cter in SUMO2). Thr-925 bears the Phosphothreonine mark. 2 disordered regions span residues 950–1026 and 1033–1052; these read LQKK…LNPV and EASDLSISKSRLPLHTSINL. The stretch at 963–988 forms a coiled coil; the sequence is EASKETSQDMDEEREALEQCTEELVS. The segment covering 1016 to 1026 has biased composition (basic and acidic residues); sequence KDKENRGLNPV.

The protein belongs to the TRAFAC class myosin-kinesin ATPase superfamily. Kinesin family. BimC subfamily. As to quaternary structure, interacts with the thyroid hormone receptor in the presence of thyroid hormone. Component of a large chromatin remodeling complex, at least composed of MYSM1, PCAF, RBM10 and KIF11/TRIP5. Interacts with RARRES1 and AGBL2. Post-translationally, phosphorylated exclusively on serine during S phase, but on both serine and Thr-925 during mitosis, so controlling the association of KIF11 with the spindle apparatus (probably during early prophase).

Its subcellular location is the cytoplasm. It is found in the cytoskeleton. It localises to the spindle pole. Motor protein required for establishing a bipolar spindle during mitosis. Required in non-mitotic cells for transport of secretory proteins from the Golgi complex to the cell surface. In Mus musculus (Mouse), this protein is Kinesin-like protein KIF11 (Kif11).